Reading from the N-terminus, the 514-residue chain is Arabinose import ATP-binding protein AraG (514 aa).

ABC transporter domains follow at residues 16–251 and 251–507; these read LRFN…MVGR and RDIQ…LPRH. 48–55 serves as a coordination point for ATP; that stretch reads GENGAGKS.

Belongs to the ABC transporter superfamily. Arabinose importer (TC 3.A.1.2.2) family. In terms of assembly, the complex is composed of two ATP-binding proteins (AraG), two transmembrane proteins (AraH) and a solute-binding protein (AraF).

The protein localises to the cell inner membrane. It catalyses the reaction L-arabinose(out) + ATP + H2O = L-arabinose(in) + ADP + phosphate + H(+). Functionally, part of the ABC transporter complex AraFGH involved in arabinose import. Responsible for energy coupling to the transport system. In Pseudomonas fluorescens (strain Pf0-1), this protein is Arabinose import ATP-binding protein AraG.